A 236-amino-acid polypeptide reads, in one-letter code: Small ribosomal subunit protein eS6 (236 aa).

2 positions are modified to phosphoserine: Ser232 and Ser233.

The protein belongs to the eukaryotic ribosomal protein eS6 family. Phosphorylated.

In Candida glabrata (strain ATCC 2001 / BCRC 20586 / JCM 3761 / NBRC 0622 / NRRL Y-65 / CBS 138) (Yeast), this protein is Small ribosomal subunit protein eS6 (RPS6A).